Here is a 214-residue protein sequence, read N- to C-terminus: Probable GTP-binding protein EngB (214 aa).

The 173-residue stretch at 22-194 folds into the EngB-type G domain; sequence NLPEIAFAGR…WARIDALLSP (173 aa). Residues 30–37, 57–61, 75–78, 142–145, and 173–175 each bind GTP; these read GRSNVGKS, GRTQL, DLPG, TKCD, and FSA. Positions 37 and 59 each coordinate Mg(2+).

It belongs to the TRAFAC class TrmE-Era-EngA-EngB-Septin-like GTPase superfamily. EngB GTPase family. Mg(2+) is required as a cofactor.

Necessary for normal cell division and for the maintenance of normal septation. This chain is Probable GTP-binding protein EngB, found in Citrifermentans bemidjiense (strain ATCC BAA-1014 / DSM 16622 / JCM 12645 / Bem) (Geobacter bemidjiensis).